The chain runs to 120 residues: Basic phospholipase A2 homolog piratoxin-3 (120 aa).

7 disulfide bridges follow: C26/C113, C28/C44, C43/C94, C49/C120, C50/C87, C57/C81, and C75/C85. The important for membrane-damaging activities in eukaryotes and bacteria; heparin-binding stretch occupies residues 104–115 (KKYRYHLKPCKK).

Belongs to the phospholipase A2 family. Group II subfamily. D49 sub-subfamily. As to quaternary structure, homodimer; non-covalently linked (probable alternative/compact dimer conformation). In terms of tissue distribution, expressed by the venom gland.

The protein resides in the secreted. Functionally, snake venom phospholipase A2 (PLA2) that lacks enzymatic activity. Shows high myotoxin activities. Also has anticoagulant activity. A model of myotoxic mechanism has been proposed: an apo Lys49-PLA2 is activated by the entrance of a hydrophobic molecule (e.g. fatty acid) at the hydrophobic channel of the protein leading to a reorientation of a monomer. This reorientation causes a transition between 'inactive' to 'active' states, causing alignment of C-terminal and membrane-docking sites (MDoS) side-by-side and putting the membrane-disruption sites (MDiS) in the same plane, exposed to solvent and in a symmetric position for both monomers. The MDoS region stabilizes the toxin on membrane by the interaction of charged residues with phospholipid head groups. Subsequently, the MDiS region destabilizes the membrane with penetration of hydrophobic residues. This insertion causes a disorganization of the membrane, allowing an uncontrolled influx of ions (i.e. calcium and sodium), and eventually triggering irreversible intracellular alterations and cell death. This Bothrops pirajai (Piraja's lancehead) protein is Basic phospholipase A2 homolog piratoxin-3.